Consider the following 330-residue polypeptide: ADP-L-glycero-D-manno-heptose-6-epimerase (330 aa).

Residues 11-12 (FI), 32-33 (DN), Lys-39, Lys-54, 75-79 (EGACS), and Asn-92 each bind NADP(+). The Proton acceptor role is filled by Tyr-139. Residue Lys-143 participates in NADP(+) binding. Residue Asn-168 participates in substrate binding. NADP(+)-binding residues include Val-169 and Lys-177. Residue Lys-177 is the Proton acceptor of the active site. Residues Arg-179, His-186, 200-203 (FGEY), Arg-213, and Tyr-292 contribute to the substrate site.

Belongs to the NAD(P)-dependent epimerase/dehydratase family. HldD subfamily. As to quaternary structure, homopentamer. The cofactor is NADP(+).

It catalyses the reaction ADP-D-glycero-beta-D-manno-heptose = ADP-L-glycero-beta-D-manno-heptose. The protein operates within nucleotide-sugar biosynthesis; ADP-L-glycero-beta-D-manno-heptose biosynthesis; ADP-L-glycero-beta-D-manno-heptose from D-glycero-beta-D-manno-heptose 7-phosphate: step 4/4. Functionally, catalyzes the interconversion between ADP-D-glycero-beta-D-manno-heptose and ADP-L-glycero-beta-D-manno-heptose via an epimerization at carbon 6 of the heptose. The sequence is that of ADP-L-glycero-D-manno-heptose-6-epimerase from Burkholderia thailandensis (strain ATCC 700388 / DSM 13276 / CCUG 48851 / CIP 106301 / E264).